The sequence spans 379 residues: uncharacterized protein (379 aa).

It belongs to the glycosyltransferase 28 family.

This is an uncharacterized protein from Methanosarcina acetivorans (strain ATCC 35395 / DSM 2834 / JCM 12185 / C2A).